A 649-amino-acid polypeptide reads, in one-letter code: MADPAGTNGEEGTGCNGWFYVEAVVEKKTGDAISDDENENDSDTGEDLVDFIVNDNDYLTQAETETAHALFTAQEAKQHRDAVQVLKRKYLVSPLSDISGCVDNNISPRLKAICIEKQSRAAKRRLFESEDSGYGNTEVETQQMLQVEGRHETETPCSQYSGGSGGGCSQYSSGSGGEGVSERHTICQTPLTNILNVLKTSNAKAAMLAKFKELYGVSFSELVRPFKSNKSTCCDWCIAAFGLTPSIADSIKTLLQQYCLYLHIQSLACSWGMVVLLLVRYKCGKNRETIEKLLSKLLCVSPMCMMIEPPKLRSTAAALYWYKTGISNISEVYGDTPEWIQRQTVLQHSFNDCTFELSQMVQWAYDNDIVDDSEIAYKYAQLADTNSNASAFLKSNSQAKIVKDCATMCRHYKRAEKKQMSMSQWIKYRCDRVDDGGDWKQIVMFLRYQGVEFMSFLTALKRFLQGIPKKNCILLYGAANTGKSLFGMSLMKFLQGSVICFVNSKSHFWLQPLADAKIGMLDDATVPCWNYIDDNLRNALDGNLVSMDVKHRPLVQLKCPPLLITSNINAGTDSRWPYLHNRLVVFTFPNEFPFDENGNPVYELNDKNWKSFFSRTWSRLSLHEDEDKENDGDSLPTFKCVSGQNTNTL.

The short motif at 87–89 (KRK) is the Nuclear localization signal element. A phosphoserine; by host mark is found at S93 and S107. The Nuclear export signal motif lies at 106 to 115 (ISPRLKAICI). A DNA-binding region region spans residues 186–352 (ICQTPLTNIL…QTVLQHSFND (167 aa)). The SF3 helicase domain maps to 451–601 (VEFMSFLTAL…FPFDENGNPV (151 aa)). ATP is bound at residue 477–484 (GAANTGKS). K558 participates in a covalent cross-link: Glycyl lysine isopeptide (Lys-Gly) (interchain with G-Cter in SUMO). Residues 624-649 (EDEDKENDGDSLPTFKCVSGQNTNTL) form a disordered region.

It belongs to the papillomaviridae E1 protein family. Can form hexamers. Interacts with E2 protein; this interaction increases E1 DNA binding specificity. Interacts with host DNA polymerase subunit POLA2. Interacts with host single stranded DNA-binding protein RPA1. Interacts with host TOP1; this interaction stimulates the enzymatic activity of TOP1. In terms of processing, phosphorylated. Sumoylated.

The protein resides in the host nucleus. It catalyses the reaction Couples ATP hydrolysis with the unwinding of duplex DNA by translocating in the 3'-5' direction.. It carries out the reaction ATP + H2O = ADP + phosphate + H(+). Its function is as follows. ATP-dependent DNA 3'-5' helicase required for initiation of viral DNA replication. It forms a complex with the viral E2 protein. The E1-E2 complex binds to the replication origin which contains binding sites for both proteins. During the initial step, a dimer of E1 interacts with a dimer of protein E2 leading to a complex that binds the viral origin of replication with high specificity. Then, a second dimer of E1 displaces the E2 dimer in an ATP-dependent manner to form the E1 tetramer. Following this, two E1 monomers are added to each half of the site, which results in the formation of two E1 trimers on the viral ori. Subsequently, two hexamers will be created. The double hexamer acts as a bi-directional helicase machinery and unwinds the viral DNA and then recruits the host DNA polymerase to start replication. This is Replication protein E1 from Human papillomavirus type 16.